A 169-amino-acid chain; its full sequence is Phosphopantetheine adenylyltransferase (169 aa).

Ser-10 contributes to the substrate binding site. Residues 10-11 and His-18 contribute to the ATP site; that span reads SF. Substrate contacts are provided by Lys-42, Thr-79, and Arg-93. ATP is bound by residues 94 to 96, Glu-104, and 129 to 135; these read GLR and VRPITAT.

This sequence belongs to the bacterial CoaD family. In terms of assembly, homohexamer. Mg(2+) is required as a cofactor.

It localises to the cytoplasm. It catalyses the reaction (R)-4'-phosphopantetheine + ATP + H(+) = 3'-dephospho-CoA + diphosphate. The protein operates within cofactor biosynthesis; coenzyme A biosynthesis; CoA from (R)-pantothenate: step 4/5. In terms of biological role, reversibly transfers an adenylyl group from ATP to 4'-phosphopantetheine, yielding dephospho-CoA (dPCoA) and pyrophosphate. In Rhodopseudomonas palustris (strain ATCC BAA-98 / CGA009), this protein is Phosphopantetheine adenylyltransferase.